Consider the following 85-residue polypeptide: MSLNVISDDRTPHQHGTWNVAGALAPKVETSNSAHHDADSHSVVYDARYAKRPENHLAAIVNLVATNLNGAISKEHRKFESGRRS.

This is an uncharacterized protein from Sinorhizobium fredii (strain NBRC 101917 / NGR234).